The primary structure comprises 841 residues: Probable alpha-glucuronidase A (841 aa).

An N-terminal signal peptide occupies residues 1-20; sequence MRGLNLFQLILALLLSMVAA. N-linked (GlcNAc...) asparagine glycans are attached at residues N51, N76, N85, N149, N222, N279, N310, N343, N450, N465, N527, N576, N682, N723, and N732.

This sequence belongs to the glycosyl hydrolase 67 family.

The protein resides in the secreted. The enzyme catalyses an alpha-D-glucuronoside + H2O = D-glucuronate + an alcohol. Its function is as follows. Alpha-glucuronidase involved in the hydrolysis of xylan, a major structural heterogeneous polysaccharide found in plant biomass representing the second most abundant polysaccharide in the biosphere, after cellulose. Releases 4-O-methylglucuronic acid from xylan. The chain is Probable alpha-glucuronidase A (aguA) from Aspergillus niger (strain ATCC MYA-4892 / CBS 513.88 / FGSC A1513).